A 135-amino-acid chain; its full sequence is UPF0251 protein Hore_18270 (135 aa).

It belongs to the UPF0251 family.

The chain is UPF0251 protein Hore_18270 from Halothermothrix orenii (strain H 168 / OCM 544 / DSM 9562).